Here is a 315-residue protein sequence, read N- to C-terminus: DNA-directed RNA polymerase subunit alpha (315 aa).

Positions 1-228 (MAQFQIECVE…DLFNPLKDIS (228 aa)) are alpha N-terminal domain (alpha-NTD). Residues 243-315 (TAQIPIEELQ…LPQERSSKHN (73 aa)) are alpha C-terminal domain (alpha-CTD).

This sequence belongs to the RNA polymerase alpha chain family. In terms of assembly, homodimer. In cyanobacteria the RNAP catalytic core is composed of 2 alpha, 1 beta, 1 beta', 1 gamma and 1 omega subunit. When a sigma factor is associated with the core the holoenzyme is formed, which can initiate transcription.

The catalysed reaction is RNA(n) + a ribonucleoside 5'-triphosphate = RNA(n+1) + diphosphate. Its function is as follows. DNA-dependent RNA polymerase catalyzes the transcription of DNA into RNA using the four ribonucleoside triphosphates as substrates. This chain is DNA-directed RNA polymerase subunit alpha, found in Nostoc sp. (strain PCC 7120 / SAG 25.82 / UTEX 2576).